Here is a 680-residue protein sequence, read N- to C-terminus: Methionine--tRNA ligase (680 aa).

A 'HIGH' region motif is present at residues 15–25 (PYANGPVHIGH). Zn(2+) contacts are provided by cysteine 147, cysteine 150, cysteine 160, and cysteine 163. Positions 332–336 (KISTS) match the 'KMSKS' region motif. Threonine 335 serves as a coordination point for ATP. Residues 579–680 (DFLKLDIRVG…AEVAPGSQVK (102 aa)) enclose the tRNA-binding domain.

This sequence belongs to the class-I aminoacyl-tRNA synthetase family. MetG type 1 subfamily. As to quaternary structure, homodimer. Requires Zn(2+) as cofactor.

The protein resides in the cytoplasm. The enzyme catalyses tRNA(Met) + L-methionine + ATP = L-methionyl-tRNA(Met) + AMP + diphosphate. Functionally, is required not only for elongation of protein synthesis but also for the initiation of all mRNA translation through initiator tRNA(fMet) aminoacylation. This Porphyromonas gingivalis (strain ATCC 33277 / DSM 20709 / CIP 103683 / JCM 12257 / NCTC 11834 / 2561) protein is Methionine--tRNA ligase.